Reading from the N-terminus, the 660-residue chain is MEMTSTSLKRGCLVVEDNDSVTPHDETKKQKVSEGCLTSSQDGVENDGLHRSENEPGPPEAESTVKDDENSSAQVQEEEEEEEEEDGLSEAGEEEEAESFADMMKHGLTELDVGICKFVSSHHGFSGILKERYSDFVVHEIGKDGRISHLDDLSVPVDEEDPPEDALTVLTAEDRQQLEELQLFKNKETSVAIEVIEDTKEKRTVIHQAIKSLFPGLETKTEDREGRKYIVAYHAAGKKALANPRKHSWPKSRGSYCHFVLYKENKDTMDAINVLSKYLRVKPNIFSYMGTKDKRAITVQEIAVLKISAQRLAHLNKCLMNLKLGNFSYQKTPLKLGALQGNHFTVVLRNITGTDEQVQQAMQSLRETGFINYYGMQRFGTTAVPTYQVGRAILQNSWTEVMDLILKPRSGAEKGYLVKCREEWAKTKDPASALKKLPVKRCVEGQLLRGLSRYGMKNIVSAFGIIPRNNRLMYIHSYQSYVWNTMVSRRIEEYGLRPVPGDLVLKGATPTYIEEDDVDNYSIHDVVMPLPGFDVIYPKHKISEAYREMLAADNLDIDNMRHTIRDYSLSGAYRRIIIRPQSVSWEVVAYDDPKIPLFNTDVDNLEGKPPPVFASEGKYRALKMDFSLPPSTYATMAIREVLKMDTSIKNQTQLNTSWLR.

Residues 1-99 are disordered; that stretch reads MEMTSTSLKR…EAGEEEEAES (99 aa). A Phosphoserine modification is found at Ser7. The segment covering 22–32 has biased composition (basic and acidic residues); the sequence is TPHDETKKQKV. The segment covering 76 to 99 has biased composition (acidic residues); the sequence is QEEEEEEEEEDGLSEAGEEEEAES. Residue Ser126 is modified to Phosphoserine. The active-site Nucleophile is the Asp293. The TRUD domain maps to 369–579; the sequence is GFINYYGMQR…SGAYRRIIIR (211 aa).

Belongs to the pseudouridine synthase TruD family. As to quaternary structure, interacts with SIRT1.

It is found in the nucleus. The catalysed reaction is a uridine in tRNA = a pseudouridine in tRNA. The enzyme catalyses uridine(13) in tRNA = pseudouridine(13) in tRNA. It catalyses the reaction a uridine in mRNA = a pseudouridine in mRNA. In terms of biological role, pseudouridylate synthase that catalyzes pseudouridylation of RNAs. Acts as a regulator of protein synthesis in embryonic stem cells by mediating pseudouridylation of RNA fragments derived from tRNAs (tRFs): pseudouridylated tRFs inhibit translation by targeting the translation initiation complex. Also catalyzes pseudouridylation of mRNAs: mediates pseudouridylation of mRNAs with the consensus sequence 5'-UGUAG-3'. Acts as a regulator of pre-mRNA splicing by mediating pseudouridylation of pre-mRNAs at locations associated with alternatively spliced regions. Pseudouridylation of pre-mRNAs near splice sites directly regulates mRNA splicing and mRNA 3'-end processing. In addition to mRNAs and tRNAs, binds other types of RNAs, such as snRNAs, Y RNAs and vault RNAs, suggesting that it can catalyze pseudouridylation of many RNA types. The chain is Pseudouridylate synthase 7 homolog from Mus musculus (Mouse).